A 639-amino-acid chain; its full sequence is Coiled-coil domain-containing protein 93 homolog (639 aa).

Residues 250–275 are disordered; the sequence is KLESQLSGKDGSGKDTTEAEREEEEK. The segment covering 260-275 has biased composition (basic and acidic residues); it reads GSGKDTTEAEREEEEK. A coiled-coil region spans residues 332–492; sequence AEKLHRQKIT…KNRDISLIQR (161 aa).

Belongs to the CCDC93 family.

This is Coiled-coil domain-containing protein 93 homolog from Dictyostelium discoideum (Social amoeba).